The following is a 156-amino-acid chain: Small ribosomal subunit protein uS7 (156 aa).

This sequence belongs to the universal ribosomal protein uS7 family. Part of the 30S ribosomal subunit. Contacts proteins S9 and S11.

One of the primary rRNA binding proteins, it binds directly to 16S rRNA where it nucleates assembly of the head domain of the 30S subunit. Is located at the subunit interface close to the decoding center, probably blocks exit of the E-site tRNA. The polypeptide is Small ribosomal subunit protein uS7 (Metamycoplasma arthritidis (strain 158L3-1) (Mycoplasma arthritidis)).